The sequence spans 277 residues: Nickel import ATP-binding protein NikE (277 aa).

The region spanning 14–253 (YRTVSLVGRS…EHPASRALQR (240 aa)) is the ABC transporter domain. 46–53 (GRSGSGKS) is a binding site for ATP.

This sequence belongs to the ABC transporter superfamily. Nickel importer (TC 3.A.1.5.3) family. As to quaternary structure, the complex is composed of two ATP-binding proteins (NikD and NikE), two transmembrane proteins (NikB and NikC) and a solute-binding protein (NikA).

It localises to the cell inner membrane. The catalysed reaction is Ni(2+)(out) + ATP + H2O = Ni(2+)(in) + ADP + phosphate + H(+). Its function is as follows. Part of the ABC transporter complex NikABCDE involved in nickel import. Responsible for energy coupling to the transport system. The polypeptide is Nickel import ATP-binding protein NikE (Rhodospirillum rubrum (strain ATCC 11170 / ATH 1.1.1 / DSM 467 / LMG 4362 / NCIMB 8255 / S1)).